The primary structure comprises 820 residues: Leucine--tRNA ligase (820 aa).

The short motif at 40 to 51 is the 'HIGH' region element; sequence PYPSGAGLHVGH. The 'KMSKS' region signature appears at 601 to 605; the sequence is KMSKS. Lysine 604 provides a ligand contact to ATP.

It belongs to the class-I aminoacyl-tRNA synthetase family.

It localises to the cytoplasm. The enzyme catalyses tRNA(Leu) + L-leucine + ATP = L-leucyl-tRNA(Leu) + AMP + diphosphate. This chain is Leucine--tRNA ligase, found in Chlamydia abortus (strain DSM 27085 / S26/3) (Chlamydophila abortus).